Reading from the N-terminus, the 438-residue chain is Polycomb protein eed-B (438 aa).

The disordered stretch occupies residues 1–70; the sequence is MSEASGRAAG…GRKGWGKGKW (70 aa). Polar residues predominate over residues 40-57; it reads SIESGTNTERPDTPTNAA. WD repeat units follow at residues 88–131, 139–182, 185–225, 231–270, 301–338, 356–396, and 405–438; these read DHNQ…DIRL, DADE…CIKH, GHGN…LVAI, GHRD…MKTA, IHRN…DDIE, SQCD…PHKA, and KCAS…DRLR.

This sequence belongs to the WD repeat ESC family. In terms of assembly, component of the prc2/eed-ezh2 complex. Can interact with ezh2, hdac1 and taf9. Interacts with yy1.

It localises to the nucleus. In terms of biological role, polycomb group (PcG) protein. Component of the prc2/eed-ezh2 complex, which methylates 'Lys-9' and 'Lys-27' of histone H3, leading to transcriptional repression of the affected target gene. May play a role in neural induction. The protein is Polycomb protein eed-B (eed-b) of Xenopus laevis (African clawed frog).